A 445-amino-acid polypeptide reads, in one-letter code: MTNFTPREIVSELDRYIIGQKQAKRAVAVALRNRWRRQQVADELRDEIAPKNIIMIGPTGVGKTEIARRLARLAQAPFIKVEASKFTEVGYVGRDVESMVRDLLDLAIIMIREEEARKVRVKAEDLAEERLLDLLLPGAQSRDPDLSGEEAGEGGTRDKLRKLLRKGALDERKVELEVQAAQMPMMEVFTPQGTEEMGINFKEMFGNLFPKKTKRRQIKVSEAREILIEQEAERLVDMEKVNTLARERVEQSGIIFIDEIDKIAGQNGRQGPDVSREGVQRDILPIVEGSTVSTKYGPVKTDHILFVAAGAFHVAKPSDLIPELQGRFPIRVELTSLGEEEFFRILTEPKNALIRQYEALMETEGIRLHFTEEAIREIARIATQVNSQTENIGARRLHTIMEKLLEELSFEAPEHREQSVEIDVDYVRKQLSDIARDEDLSRYIL.

ATP is bound by residues I18, 60–65 (GVGKTE), D258, E323, and R395.

Belongs to the ClpX chaperone family. HslU subfamily. In terms of assembly, a double ring-shaped homohexamer of HslV is capped on each side by a ring-shaped HslU homohexamer. The assembly of the HslU/HslV complex is dependent on binding of ATP.

The protein resides in the cytoplasm. Its function is as follows. ATPase subunit of a proteasome-like degradation complex; this subunit has chaperone activity. The binding of ATP and its subsequent hydrolysis by HslU are essential for unfolding of protein substrates subsequently hydrolyzed by HslV. HslU recognizes the N-terminal part of its protein substrates and unfolds these before they are guided to HslV for hydrolysis. The protein is ATP-dependent protease ATPase subunit HslU of Syntrophotalea carbinolica (strain DSM 2380 / NBRC 103641 / GraBd1) (Pelobacter carbinolicus).